A 376-amino-acid polypeptide reads, in one-letter code: 1-deoxy-D-xylulose 5-phosphate reductoisomerase (376 aa).

T12, G13, S14, I15, R39, Q40, and N110 together coordinate NADPH. K111 provides a ligand contact to 1-deoxy-D-xylulose 5-phosphate. E112 is an NADPH binding site. D136 is a Mn(2+) binding site. Residues S137, E138, S162, and H185 each contribute to the 1-deoxy-D-xylulose 5-phosphate site. E138 is a binding site for Mn(2+). G191 lines the NADPH pocket. 1-deoxy-D-xylulose 5-phosphate contacts are provided by S198, N203, K204, and E207. E207 provides a ligand contact to Mn(2+).

This sequence belongs to the DXR family. It depends on Mg(2+) as a cofactor. The cofactor is Mn(2+).

It carries out the reaction 2-C-methyl-D-erythritol 4-phosphate + NADP(+) = 1-deoxy-D-xylulose 5-phosphate + NADPH + H(+). It functions in the pathway isoprenoid biosynthesis; isopentenyl diphosphate biosynthesis via DXP pathway; isopentenyl diphosphate from 1-deoxy-D-xylulose 5-phosphate: step 1/6. Functionally, catalyzes the NADPH-dependent rearrangement and reduction of 1-deoxy-D-xylulose-5-phosphate (DXP) to 2-C-methyl-D-erythritol 4-phosphate (MEP). The chain is 1-deoxy-D-xylulose 5-phosphate reductoisomerase from Treponema pallidum (strain Nichols).